The following is a 506-amino-acid chain: GMP synthase [glutamine-hydrolyzing] (506 aa).

The 186-residue stretch at 3–188 (GFVILDFGSQ…AQGMCKAPAD (186 aa)) folds into the Glutamine amidotransferase type-1 domain. Residue Cys80 is the Nucleophile of the active site. Active-site residues include His162 and Glu164. The GMPS ATP-PPase domain occupies 189-381 (WDAPHIKDIL…LGLPKEMLWR (193 aa)). 217–223 (SGGVDST) contacts ATP.

As to quaternary structure, homodimer.

It carries out the reaction XMP + L-glutamine + ATP + H2O = GMP + L-glutamate + AMP + diphosphate + 2 H(+). Its pathway is purine metabolism; GMP biosynthesis; GMP from XMP (L-Gln route): step 1/1. In terms of biological role, catalyzes the synthesis of GMP from XMP. The chain is GMP synthase [glutamine-hydrolyzing] from Bdellovibrio bacteriovorus (strain ATCC 15356 / DSM 50701 / NCIMB 9529 / HD100).